Here is a 351-residue protein sequence, read N- to C-terminus: Mitogen-activated protein kinase 2 (351 aa).

The Protein kinase domain occupies tyrosine 16–leucine 304. Residues isoleucine 22–valine 30 and lysine 45 each bind ATP. Aspartate 140 (proton acceptor) is an active-site residue. At threonine 176 the chain carries Phosphothreonine. The short motif at threonine 176–tyrosine 178 is the TXY element. Tyrosine 178 carries the phosphotyrosine modification.

The protein belongs to the protein kinase superfamily. CMGC Ser/Thr protein kinase family. MAP kinase subfamily. Requires Mg(2+) as cofactor. Mn(2+) serves as cofactor. Post-translationally, dually phosphorylated on Thr-176 and Tyr-178, which activates the enzyme.

The protein localises to the nucleus. It carries out the reaction L-seryl-[protein] + ATP = O-phospho-L-seryl-[protein] + ADP + H(+). It catalyses the reaction L-threonyl-[protein] + ATP = O-phospho-L-threonyl-[protein] + ADP + H(+). With respect to regulation, activated by tyrosine and threonine phosphorylation. Inhibited by the MEK inhibitor U0126 but not by the p38 inhibitor SB203580. Cobalt abolishes kinase activity, while calcium, copper and nickel have little effect on kinase activity. Serine-threonine protein kinase which may be involved in pheromone signaling. Functionally complements the MAPK pheromone signaling pathway in S.cerevisiae. This Pneumocystis carinii protein is Mitogen-activated protein kinase 2.